The chain runs to 196 residues: Holliday junction branch migration complex subunit RuvA (196 aa).

The interval 1–63 (MYDYIKGKLS…DDAHLLFGFH (63 aa)) is domain I. Residues 64–142 (TENEKEIFLN…EASGESATSR (79 aa)) form a domain II region. Residues 143–148 (KVSSEQ) are flexible linker. Residues 148–196 (QNSNLEEAMEALLALGYKATELKKVKAFFEGTNETVEQYIKSSLKMLMK) are domain III.

The protein belongs to the RuvA family. In terms of assembly, homotetramer. Forms an RuvA(8)-RuvB(12)-Holliday junction (HJ) complex. HJ DNA is sandwiched between 2 RuvA tetramers; dsDNA enters through RuvA and exits via RuvB. An RuvB hexamer assembles on each DNA strand where it exits the tetramer. Each RuvB hexamer is contacted by two RuvA subunits (via domain III) on 2 adjacent RuvB subunits; this complex drives branch migration. In the full resolvosome a probable DNA-RuvA(4)-RuvB(12)-RuvC(2) complex forms which resolves the HJ.

It localises to the cytoplasm. In terms of biological role, the RuvA-RuvB-RuvC complex processes Holliday junction (HJ) DNA during genetic recombination and DNA repair, while the RuvA-RuvB complex plays an important role in the rescue of blocked DNA replication forks via replication fork reversal (RFR). RuvA specifically binds to HJ cruciform DNA, conferring on it an open structure. The RuvB hexamer acts as an ATP-dependent pump, pulling dsDNA into and through the RuvAB complex. HJ branch migration allows RuvC to scan DNA until it finds its consensus sequence, where it cleaves and resolves the cruciform DNA. This is Holliday junction branch migration complex subunit RuvA from Streptococcus agalactiae serotype Ia (strain ATCC 27591 / A909 / CDC SS700).